The following is a 33-amino-acid chain: Brevinin-2Rk (33 aa).

Cysteine 27 and cysteine 33 form a disulfide bridge.

As to expression, expressed by the skin glands.

It localises to the secreted. Its function is as follows. Antimicrobial peptide. In Pelophylax ridibundus (Marsh frog), this protein is Brevinin-2Rk.